Reading from the N-terminus, the 587-residue chain is Aspartate--tRNA ligase (587 aa).

Glutamate 174 serves as a coordination point for L-aspartate. Residues 198 to 201 are aspartate; the sequence is QITK. Arginine 220 is a binding site for L-aspartate. ATP-binding positions include 220 to 222 and glutamine 229; that span reads RDE. Histidine 443 is an L-aspartate binding site. Glutamate 477 lines the ATP pocket. Arginine 484 contributes to the L-aspartate binding site. 529-532 is an ATP binding site; that stretch reads GLDR.

It belongs to the class-II aminoacyl-tRNA synthetase family. Type 1 subfamily. In terms of assembly, homodimer.

It localises to the cytoplasm. It catalyses the reaction tRNA(Asp) + L-aspartate + ATP = L-aspartyl-tRNA(Asp) + AMP + diphosphate. Its function is as follows. Catalyzes the attachment of L-aspartate to tRNA(Asp) in a two-step reaction: L-aspartate is first activated by ATP to form Asp-AMP and then transferred to the acceptor end of tRNA(Asp). The sequence is that of Aspartate--tRNA ligase from Streptococcus pneumoniae serotype 19F (strain G54).